Consider the following 217-residue polypeptide: TPA-induced transmembrane protein (217 aa).

The disordered stretch occupies residues 1–37 (MDLAQPSQPVDELELSVLERQPEENTPLNGADKVFPS). Residues 66–86 (LWMIITSIFLGVITVIIIGLC) form a helical membrane-spanning segment.

As to quaternary structure, interacts with LIPH. Detected predominantly in the skin, with strongest expression in the inner root sheath of the hair follicle.

Its subcellular location is the endoplasmic reticulum. The protein resides in the cell membrane. Has a role in LIPH-mediated synthesis of 2-acyl lysophosphatidic acid (LPA). LPA is a bioactive lipid mediator involved in different biological processes, and necessary to promote hair formation and growth. This is TPA-induced transmembrane protein (TTMP) from Homo sapiens (Human).